Here is a 111-residue protein sequence, read N- to C-terminus: UPF0145 protein BMA10229_A0446 (111 aa).

Belongs to the UPF0145 family.

This is UPF0145 protein BMA10229_A0446 from Burkholderia mallei (strain NCTC 10229).